The primary structure comprises 204 residues: Copper-binding protein CutI (204 aa).

The first 26 residues, 1–26 (MLKKIALTLCPAIVGSLLFFTAPASA), serve as a signal peptide directing secretion. Cu(2+)-binding residues include His27 and Glu50. Residues 27–178 (HVSVKPAESA…DDSENSGSSA (152 aa)) lie on the Extracellular side of the membrane. The interval 146-176 (PHSITNITSAKQVTDEHGATKTEDDSENSGS) is disordered. A compositionally biased stretch (polar residues) spans 147–157 (HSITNITSAKQ). Basic and acidic residues predominate over residues 158–168 (VTDEHGATKTE). The helical transmembrane segment at 179–199 (LDITAMVLSAAAIILSVAALV) threads the bilayer. Topologically, residues 200–204 (KKKRA) are cytoplasmic.

It is found in the cell membrane. Its function is as follows. Copper-binding protein that probably plays a role in copper homeostasis. May act as metallochaperone, possibly to facilitate copper uptake via the CutJ/YcnJ importer. Preferentially binds Cu in its oxidized Cu(II) state in a 1:1 stoichiometry. The polypeptide is Copper-binding protein CutI (Bacillus subtilis (strain 168)).